The sequence spans 83 residues: MFKHVLLSIIIFLGINQNVYSINSNSYKTDDIIKIVIILGIVILIFSPAKFRIIVIGTILGLACAYFTYKYIIPIFIASLNAA.

3 helical membrane-spanning segments follow: residues Val-5–Ile-22, Ile-32–Ala-49, and Ile-56–Ala-78.

The protein resides in the cell membrane. This is an uncharacterized protein from Rickettsia prowazekii (strain Madrid E).